The chain runs to 242 residues: Ras-like protein family member 11A (242 aa).

Residues 17–241 (ESSSDYLLPK…SSKAKAASTL (225 aa)) are small GTPase-like. GTP-binding positions include 34–41 (GASCVGKS), 81–85 (DTPGG), and 147–150 (NKGD).

Belongs to the small GTPase superfamily. Ras family. Interacts with UBF/UBTF.

It localises to the nucleus. Its subcellular location is the nucleolus. The enzyme catalyses GTP + H2O = GDP + phosphate + H(+). Its function is as follows. Regulator of rDNA transcription. Acts in cooperation UBF/UBTF and positively regulates RNA polymerase I transcription. This is Ras-like protein family member 11A from Rattus norvegicus (Rat).